Here is a 911-residue protein sequence, read N- to C-terminus: MCSHFTQDFLPVQGIEDSFHKLILRRYEKCGHDNLQLRKGCKSMNVCKVQKGVYNGINKCLSNTQSKIFQCNARVKVFSKFANSNKDKTRHTGEKHFKCNECGKSFQKFSDLTQHKGIHAGEKPYTCEERGKDFGWYTDLNQHKKIHTGEKPYKCEECGKAFNRSTNLTAHKRIHNREKAYTGEDRDRAFGWSTNLNEYKKIHTGDKPYKCKECGKAFMHSSHLNKHEKIHTGEKPYKCKECGKVISSSSSFAKHKRIHTGEKPFKCLECGKAFNISTTLTKHRRIHTGEKPYTCEVCGKAFRQSANLYVHRRIHTGEKPYTCGECGKTFRQSANLYVHRRIHTGEKPYKCEDCGKAFGRYTALNQHKKIHTGEKPYKCEECGKAFNSSTNLTAHKRIHTREKPYTCEDRGRAFGLSTNLNEYKKIHTGDKPYKCKECGKAFIHSLHLNKHEKIHTGKKPYKCKQCGKVITSSSSFAKHKRIHTGEKPFECLECGKAFTSSTTLTKHRRIHTGEKPYTCEVCGKAFRQSAILYVHRRIHTGEKPYTCEECGKTFRQSANLYVHRRIHTGEKPYKCEECGKAFGRYTDLNQHKKIHTGEKLYKCEECGKDFVWYTDLNQQKKIYTGEKPYKCEECGKAFAPSTDLNQHTKILTGEQSYKCEECGKAFGWSIALNQHKKIHTGEKPYKCEECGKAFSRSRNLTTHRRVHTREKPYKCEDRGRSFGWSTNLNEYKKIHTGDKLYKCKECGKVFKQSSHLNRHEKIHTGKKPYKCKECGKVITSSSSFAKHKRIHTGEKPFKCLECGKAFTSSTTLTKHRRIHTGEKPYTCEECGKAFRQSAILYVHRRIHTGEKPYTCGECGKTFRQSANLYAHKKIHTGEKPYTCGDCGKTFRQSANLYAHKKIHTGDKTIQV.

The segment at 69–91 (FQCNARVKVFSKFANSNKDKTRH) adopts a C2H2-type 1; degenerate zinc-finger fold. The C2H2-type 2 zinc finger occupies 97 to 119 (FKCNECGKSFQKFSDLTQHKGIH). A C2H2-type 3; degenerate zinc finger spans residues 125–147 (YTCEERGKDFGWYTDLNQHKKIH). The segment at 153–175 (YKCEECGKAFNRSTNLTAHKRIH) adopts a C2H2-type 4 zinc-finger fold. The segment at 181–203 (YTGEDRDRAFGWSTNLNEYKKIH) adopts a C2H2-type 5; degenerate zinc-finger fold. 7 C2H2-type zinc fingers span residues 209–231 (YKCK…EKIH), 237–259 (YKCK…KRIH), 265–287 (FKCL…RRIH), 293–315 (YTCE…RRIH), 321–343 (YTCG…RRIH), 349–371 (YKCE…KKIH), and 377–399 (YKCE…KRIH). The C2H2-type 13; degenerate zinc finger occupies 405 to 427 (YTCEDRGRAFGLSTNLNEYKKIH). C2H2-type zinc fingers lie at residues 433-455 (YKCK…EKIH), 461-483 (YKCK…KRIH), 489-511 (FECL…RRIH), 517-539 (YTCE…RRIH), 545-567 (YTCE…RRIH), and 573-595 (YKCE…KKIH). Lys-478 participates in a covalent cross-link: Glycyl lysine isopeptide (Lys-Gly) (interchain with G-Cter in SUMO2). The C2H2-type 20; degenerate zinc finger occupies 601-623 (YKCEECGKDFVWYTDLNQQKKIY). Residues 629-651 (YKCEECGKAFAPSTDLNQHTKIL) form a C2H2-type 21; degenerate zinc finger. Lys-649 participates in a covalent cross-link: Glycyl lysine isopeptide (Lys-Gly) (interchain with G-Cter in SUMO2). 2 consecutive C2H2-type zinc fingers follow at residues 657–679 (YKCE…KKIH) and 685–707 (YKCE…RRVH). The C2H2-type 24; degenerate zinc finger occupies 713-735 (YKCEDRGRSFGWSTNLNEYKKIH). 6 C2H2-type zinc fingers span residues 741–763 (YKCK…EKIH), 769–791 (YKCK…KRIH), 797–819 (FKCL…RRIH), 825–847 (YTCE…RRIH), 853–875 (YTCG…KKIH), and 881–903 (YTCG…KKIH). A Glycyl lysine isopeptide (Lys-Gly) (interchain with G-Cter in SUMO2) cross-link involves residue Lys-786.

Belongs to the krueppel C2H2-type zinc-finger protein family.

The protein resides in the nucleus. May be involved in transcriptional regulation. The protein is Zinc finger protein 721 (ZNF721) of Homo sapiens (Human).